Consider the following 632-residue polypeptide: Phosphatidylinositol 3,4,5-trisphosphate 3-phosphatase and protein-tyrosine-phosphatase PTEN2B (632 aa).

Positions 1-12 (METDPANSSSKS) are enriched in polar residues. The tract at residues 1–98 (METDPANSSS…RESPPSIFSS (98 aa)) is disordered. Over residues 39–48 (SAEREAHEDS) the composition is skewed to basic and acidic residues. Positions 63-73 (MPASSTGSEPL) are enriched in polar residues. Residues 87–98 (SPRESPPSIFSS) show a composition bias toward low complexity. Residues 189 to 368 (RRYQEGEFDL…KYYERVQNQF (180 aa)) form the Phosphatase tensin-type domain. Catalysis depends on cysteine 307, which acts as the Phosphocysteine intermediate. Residues 375-502 (ERRCMLRGFR…FHVEIVMIEP (128 aa)) enclose the C2 tensin-type domain. Residues 504-603 (NSQPTKSKSD…SGHYNPIPNN (100 aa)) are disordered. The span at 505-527 (SQPTKSKSDSTQQQSQSSSSADS) shows a compositional bias: low complexity. Positions 535-549 (KDDDVFSDSDGEEEG) are enriched in acidic residues. Serine 541 carries the post-translational modification Phosphoserine. A compositionally biased stretch (polar residues) spans 550-571 (NSQSYSTNEKTASSMHTTSKPH). The span at 584–594 (ANRSVTSSSSS) shows a compositional bias: low complexity.

It belongs to the PTEN phosphatase protein family. In terms of tissue distribution, expressed, at low levels, in seedlings, roots, stems, leaves, flowers and siliques. However, at protein level, not observed in older leaves, flowers and siliques.

The catalysed reaction is O-phospho-L-tyrosyl-[protein] + H2O = L-tyrosyl-[protein] + phosphate. The enzyme catalyses a 1,2-diacyl-sn-glycero-3-phospho-(1D-myo-inositol-3,4,5-trisphosphate) + H2O = a 1,2-diacyl-sn-glycero-3-phospho-(1D-myo-inositol-4,5-bisphosphate) + phosphate. Functionally, protein tyrosine phosphatase that also exhibits a weak lipid phosphatase activity towards PtdIns(3)P. The protein is Phosphatidylinositol 3,4,5-trisphosphate 3-phosphatase and protein-tyrosine-phosphatase PTEN2B of Arabidopsis thaliana (Mouse-ear cress).